The sequence spans 598 residues: NADH-quinone oxidoreductase subunit C/D (598 aa).

An NADH dehydrogenase I subunit C region spans residues 1–189; sequence MTDLTTSDST…DPFVLTKQKE (189 aa). Positions 213–598 are NADH dehydrogenase I subunit D; sequence DFMFLNLGPN…IDFVMSDVDR (386 aa).

The protein in the N-terminal section; belongs to the complex I 30 kDa subunit family. This sequence in the C-terminal section; belongs to the complex I 49 kDa subunit family. In terms of assembly, NDH-1 is composed of 13 different subunits. Subunits NuoB, CD, E, F, and G constitute the peripheral sector of the complex.

The protein resides in the cell inner membrane. It catalyses the reaction a quinone + NADH + 5 H(+)(in) = a quinol + NAD(+) + 4 H(+)(out). In terms of biological role, NDH-1 shuttles electrons from NADH, via FMN and iron-sulfur (Fe-S) centers, to quinones in the respiratory chain. The immediate electron acceptor for the enzyme in this species is believed to be ubiquinone. Couples the redox reaction to proton translocation (for every two electrons transferred, four hydrogen ions are translocated across the cytoplasmic membrane), and thus conserves the redox energy in a proton gradient. In Yersinia enterocolitica serotype O:8 / biotype 1B (strain NCTC 13174 / 8081), this protein is NADH-quinone oxidoreductase subunit C/D.